The primary structure comprises 482 residues: Glutamate--tRNA ligase (482 aa).

A 'HIGH' region motif is present at residues 9–19 (PSPTGYLHIGG). The 'KMSKS' region signature appears at 252–256 (KLSKR). Position 255 (lysine 255) interacts with ATP.

The protein belongs to the class-I aminoacyl-tRNA synthetase family. Glutamate--tRNA ligase type 1 subfamily. Monomer.

Its subcellular location is the cytoplasm. It carries out the reaction tRNA(Glu) + L-glutamate + ATP = L-glutamyl-tRNA(Glu) + AMP + diphosphate. Its function is as follows. Catalyzes the attachment of glutamate to tRNA(Glu) in a two-step reaction: glutamate is first activated by ATP to form Glu-AMP and then transferred to the acceptor end of tRNA(Glu). In Ureaplasma urealyticum serovar 10 (strain ATCC 33699 / Western), this protein is Glutamate--tRNA ligase.